The sequence spans 142 residues: Large ribosomal subunit protein uL13 (142 aa).

It belongs to the universal ribosomal protein uL13 family. As to quaternary structure, part of the 50S ribosomal subunit.

This protein is one of the early assembly proteins of the 50S ribosomal subunit, although it is not seen to bind rRNA by itself. It is important during the early stages of 50S assembly. This is Large ribosomal subunit protein uL13 from Stenotrophomonas maltophilia (strain R551-3).